A 623-amino-acid chain; its full sequence is Myosin light chain kinase 2, skeletal/cardiac muscle (623 aa).

Disordered regions lie at residues 1–179 (MATE…PSCP) and 204–251 (GVPV…QGDT). The residue at position 2 (alanine 2) is an N-acetylalanine. Over residues 20–31 (APKAAAGEGPPA) the composition is skewed to low complexity. Composition is skewed to basic and acidic residues over residues 32–43 (AEKDPGPPDPQK) and 49–89 (DPEK…EKGD). Low complexity predominate over residues 90 to 102 (GASAQPSASSQGP). The segment covering 150–159 (GEAKEQKKVA) has biased composition (basic and acidic residues). Residues serine 169, serine 175, and serine 177 each carry the phosphoserine modification. Low complexity predominate over residues 204–214 (GVPVTPGPTET). Residues 215–224 (EPAKVAEGEK) are compositionally biased toward basic and acidic residues. In terms of domain architecture, Protein kinase spans 312 to 567 (LNSKEALGGG…AAQCLAHPWL (256 aa)). Residues 318 to 326 (LGGGKFGAV) and lysine 341 contribute to the ATP site. Catalysis depends on aspartate 433, which acts as the Proton acceptor. Threonine 472 is modified (phosphothreonine). The calmodulin-binding stretch occupies residues 601-613 (IAVSAANRFKKIS).

It belongs to the protein kinase superfamily. CAMK Ser/Thr protein kinase family. In terms of assembly, may interact with centrin.

The protein resides in the cytoplasm. The catalysed reaction is L-seryl-[myosin light chain] + ATP = O-phospho-L-seryl-[myosin light chain] + ADP + H(+). It carries out the reaction L-threonyl-[myosin light chain] + ATP = O-phospho-L-threonyl-[myosin light chain] + ADP + H(+). In terms of biological role, implicated in the level of global muscle contraction and cardiac function. Phosphorylates a specific serine in the N-terminus of a myosin light chain. This Bos taurus (Bovine) protein is Myosin light chain kinase 2, skeletal/cardiac muscle (MYLK2).